Reading from the N-terminus, the 819-residue chain is Leucine--tRNA ligase (819 aa).

The 'HIGH' region motif lies at 36-46 (PYPSGKIHMGH). The short motif at 586 to 590 (KMSKS) is the 'KMSKS' region element. Residue Lys589 coordinates ATP.

This sequence belongs to the class-I aminoacyl-tRNA synthetase family.

It localises to the cytoplasm. The enzyme catalyses tRNA(Leu) + L-leucine + ATP = L-leucyl-tRNA(Leu) + AMP + diphosphate. This chain is Leucine--tRNA ligase, found in Wolbachia pipientis subsp. Culex pipiens (strain wPip).